The sequence spans 508 residues: uncharacterized protein (508 aa).

12 helical membrane-spanning segments follow: residues 65–87, 104–124, 136–156, 160–180, 192–212, 224–244, 292–312, 333–353, 357–377, 384–404, 416–436, and 450–470; these read IFPV…SYAV, WSGT…SLLL, FLVI…PGFI, VLLG…TAQW, VWVA…YGLA, LIFI…LAVV, TWIM…IGTF, LPAG…SLFI, MVLA…LSFA, LAGY…FAII, TVGV…PQTF, and TMVG…YVNW.

The protein belongs to the major facilitator superfamily. Allantoate permease family.

It is found in the endoplasmic reticulum. Its subcellular location is the golgi apparatus. The protein resides in the membrane. This is an uncharacterized protein from Schizosaccharomyces pombe (strain 972 / ATCC 24843) (Fission yeast).